The primary structure comprises 109 residues: T cell receptor alpha variable 26-1 (109 aa).

The N-terminal stretch at Met-1–Ala-19 is a signal peptide. The Ig-like domain occupies Lys-20–Val-109. Cysteines 39 and 105 form a disulfide. Residues Asn-40 and Asn-71 are each glycosylated (N-linked (GlcNAc...) asparagine).

Alpha-beta TR is a heterodimer composed of an alpha and beta chain; disulfide-linked. The alpha-beta TR is associated with the transmembrane signaling CD3 coreceptor proteins to form the TR-CD3 (TcR or TCR). The assembly of alpha-beta TR heterodimers with CD3 occurs in the endoplasmic reticulum where a single alpha-beta TR heterodimer associates with one CD3D-CD3E heterodimer, one CD3G-CD3E heterodimer and one CD247 homodimer forming a stable octameric structure. CD3D-CD3E and CD3G-CD3E heterodimers preferentially associate with TR alpha and TR beta chains, respectively. The association of the CD247 homodimer is the last step of TcR assembly in the endoplasmic reticulum and is required for transport to the cell surface.

The protein resides in the cell membrane. V region of the variable domain of T cell receptor (TR) alpha chain that participates in the antigen recognition. Alpha-beta T cell receptors are antigen specific receptors which are essential to the immune response and are present on the cell surface of T lymphocytes. Recognize peptide-major histocompatibility (MH) (pMH) complexes that are displayed by antigen presenting cells (APC), a prerequisite for efficient T cell adaptive immunity against pathogens. Binding of alpha-beta TR to pMH complex initiates TR-CD3 clustering on the cell surface and intracellular activation of LCK that phosphorylates the ITAM motifs of CD3G, CD3D, CD3E and CD247 enabling the recruitment of ZAP70. In turn ZAP70 phosphorylates LAT, which recruits numerous signaling molecules to form the LAT signalosome. The LAT signalosome propagates signal branching to three major signaling pathways, the calcium, the mitogen-activated protein kinase (MAPK) kinase and the nuclear factor NF-kappa-B (NF-kB) pathways, leading to the mobilization of transcription factors that are critical for gene expression and essential for T cell growth and differentiation. The T cell repertoire is generated in the thymus, by V-(D)-J rearrangement. This repertoire is then shaped by intrathymic selection events to generate a peripheral T cell pool of self-MH restricted, non-autoaggressive T cells. Post-thymic interaction of alpha-beta TR with the pMH complexes shapes TR structural and functional avidity. This is T cell receptor alpha variable 26-1 from Homo sapiens (Human).